Reading from the N-terminus, the 240-residue chain is Lactate utilization protein C (240 aa).

This sequence belongs to the LutC/YkgG family.

Is involved in L-lactate degradation and allows cells to grow with lactate as the sole carbon source. In Bacillus licheniformis (strain ATCC 14580 / DSM 13 / JCM 2505 / CCUG 7422 / NBRC 12200 / NCIMB 9375 / NCTC 10341 / NRRL NRS-1264 / Gibson 46), this protein is Lactate utilization protein C.